A 215-amino-acid chain; its full sequence is Octanoyltransferase (215 aa).

The 174-residue stretch at 42-215 folds into the BPL/LPL catalytic domain; the sequence is QNTPDEIWLL…AEKLKARLKQ (174 aa). Residues 81–88, 148–150, and 161–163 contribute to the substrate site; these read RGGQITYH, ALG, and GLA. C179 (acyl-thioester intermediate) is an active-site residue.

Belongs to the LipB family.

The protein resides in the cytoplasm. The enzyme catalyses octanoyl-[ACP] + L-lysyl-[protein] = N(6)-octanoyl-L-lysyl-[protein] + holo-[ACP] + H(+). It functions in the pathway protein modification; protein lipoylation via endogenous pathway; protein N(6)-(lipoyl)lysine from octanoyl-[acyl-carrier-protein]: step 1/2. In terms of biological role, catalyzes the transfer of endogenously produced octanoic acid from octanoyl-acyl-carrier-protein onto the lipoyl domains of lipoate-dependent enzymes. Lipoyl-ACP can also act as a substrate although octanoyl-ACP is likely to be the physiological substrate. The protein is Octanoyltransferase of Nitrosospira multiformis (strain ATCC 25196 / NCIMB 11849 / C 71).